The sequence spans 375 residues: Nicotinate-nucleotide--dimethylbenzimidazole phosphoribosyltransferase (375 aa).

The Proton acceptor role is filled by glutamate 323. The segment at 344-375 (LPEKPEELEAGEGPEAAEESSPEPENPEALAE) is disordered. The segment covering 351-375 (LEAGEGPEAAEESSPEPENPEALAE) has biased composition (acidic residues).

It belongs to the CobT family.

It carries out the reaction 5,6-dimethylbenzimidazole + nicotinate beta-D-ribonucleotide = alpha-ribazole 5'-phosphate + nicotinate + H(+). It participates in nucleoside biosynthesis; alpha-ribazole biosynthesis; alpha-ribazole from 5,6-dimethylbenzimidazole: step 1/2. In terms of biological role, catalyzes the synthesis of alpha-ribazole-5'-phosphate from nicotinate mononucleotide (NAMN) and 5,6-dimethylbenzimidazole (DMB). This is Nicotinate-nucleotide--dimethylbenzimidazole phosphoribosyltransferase from Streptomyces avermitilis (strain ATCC 31267 / DSM 46492 / JCM 5070 / NBRC 14893 / NCIMB 12804 / NRRL 8165 / MA-4680).